A 642-amino-acid chain; its full sequence is Threonine--tRNA ligase (642 aa).

The region spanning 1 to 61 (MPVITLPDGS…ETDAELSIIT (61 aa)) is the TGS domain. The interval 243–534 (DHRKIGKQLD…LIEEYAGRFP (292 aa)) is catalytic. C334, H385, and H511 together coordinate Zn(2+).

The protein belongs to the class-II aminoacyl-tRNA synthetase family. Homodimer. The cofactor is Zn(2+).

Its subcellular location is the cytoplasm. The catalysed reaction is tRNA(Thr) + L-threonine + ATP = L-threonyl-tRNA(Thr) + AMP + diphosphate + H(+). Catalyzes the attachment of threonine to tRNA(Thr) in a two-step reaction: L-threonine is first activated by ATP to form Thr-AMP and then transferred to the acceptor end of tRNA(Thr). Also edits incorrectly charged L-seryl-tRNA(Thr). The protein is Threonine--tRNA ligase of Shewanella baltica (strain OS195).